Here is a 48-residue protein sequence, read N- to C-terminus: Lantibiotic salivaricin-A (48 aa).

A propeptide spanning residues 1–26 (MKNSKDILNNAIEEVSEKELMEVAGG) is cleaved from the precursor. 2 cross-links (beta-methyllanthionine (Thr-Cys)) span residues 35–40 (TITDDC) and 37–47 (TDDCPNSVFVC). Positions 43-48 (SVFVCC) form a cross-link, lanthionine (Ser-Cys).

The protein belongs to the type A lantibiotic family. Maturation of lantibiotics involves the enzymatic conversion of Thr, and Ser into dehydrated AA and the formation of thioether bonds with cysteine. This is followed by membrane translocation and cleavage of the modified precursor.

Lanthionine-containing peptide antibiotic (lantibiotic) active on Gram-positive bacteria. The bactericidal activity of lantibiotics is based on depolarization of energized bacterial cytoplasmic membranes, initiated by the formation of aqueous transmembrane pores. The chain is Lantibiotic salivaricin-A (salA) from Streptococcus salivarius.